A 267-amino-acid chain; its full sequence is L-aspartate dehydrogenase (267 aa).

NAD(+)-binding residues include A124 and N190. The active site involves H220.

It belongs to the L-aspartate dehydrogenase family.

The enzyme catalyses L-aspartate + NADP(+) + H2O = oxaloacetate + NH4(+) + NADPH + H(+). It carries out the reaction L-aspartate + NAD(+) + H2O = oxaloacetate + NH4(+) + NADH + H(+). It participates in cofactor biosynthesis; NAD(+) biosynthesis; iminoaspartate from L-aspartate (dehydrogenase route): step 1/1. Its function is as follows. Specifically catalyzes the NAD or NADP-dependent dehydrogenation of L-aspartate to iminoaspartate. The chain is L-aspartate dehydrogenase from Ralstonia pickettii (strain 12J).